A 282-amino-acid chain; its full sequence is 4-diphosphocytidyl-2-C-methyl-D-erythritol kinase (282 aa).

Residue lysine 13 is part of the active site. 96–106 (PMGGGIGGGSS) is a binding site for ATP. Aspartate 138 is an active-site residue.

Belongs to the GHMP kinase family. IspE subfamily.

It catalyses the reaction 4-CDP-2-C-methyl-D-erythritol + ATP = 4-CDP-2-C-methyl-D-erythritol 2-phosphate + ADP + H(+). It functions in the pathway isoprenoid biosynthesis; isopentenyl diphosphate biosynthesis via DXP pathway; isopentenyl diphosphate from 1-deoxy-D-xylulose 5-phosphate: step 3/6. Catalyzes the phosphorylation of the position 2 hydroxy group of 4-diphosphocytidyl-2C-methyl-D-erythritol. In Pseudomonas syringae pv. syringae (strain B728a), this protein is 4-diphosphocytidyl-2-C-methyl-D-erythritol kinase.